The chain runs to 165 residues: Large ribosomal subunit protein uL15 (165 aa).

Positions 1 to 44 (MSLNQLKAPRGANRAKKRVGRGQGSGLGKTAGRGGKGQKARSGN) are disordered. Gly residues predominate over residues 21–37 (RGQGSGLGKTAGRGGKG).

Belongs to the universal ribosomal protein uL15 family. In terms of assembly, part of the 50S ribosomal subunit.

In terms of biological role, binds to the 23S rRNA. The chain is Large ribosomal subunit protein uL15 from Anaeromyxobacter dehalogenans (strain 2CP-1 / ATCC BAA-258).